We begin with the raw amino-acid sequence, 807 residues long: FAD-linked oxidoreductase pytB (807 aa).

The signal sequence occupies residues 1 to 18 (MRFLGIAAVATFSTVVSA). N-linked (GlcNAc...) asparagine glycosylation is found at Asn-45, Asn-106, Asn-120, Asn-242, Asn-295, Asn-351, Asn-419, and Asn-699. The region spanning 60 to 231 (FDELPVLLAY…VEFTLSLTSI (172 aa)) is the FAD-binding PCMH-type domain.

Belongs to the oxygen-dependent FAD-linked oxidoreductase family. It depends on FAD as a cofactor.

It participates in secondary metabolite biosynthesis. In terms of biological role, FAD-linked oxidoreductase; part of the gene cluster that mediates the biosynthesis of pyranterreones, a family of antioxidative compounds. The first step of pyranonigrins biosynthesis is performed by the hybrid PKS-NRPS synthetase pytA that condenses 4 malonyl-CoA units ato the acetyl starter unit by the modular PKS of pytA. The acyl chain is then connected to an L-serine through the amide bond by the modular NRPS of pytA. A tetramic acid is formed and released from the PKS-NRPS pytA to give pyranterreone 5 with the help of the thioesterase pytI. Pyranterreone 5 could be methylated by pytC to afford pyranterreone 6. Both pyranterreones 5 and 6 are subsequently oxidized by the FAD-linked oxidoreductase pytB and the cytochrome P450 monooxygenase pytD to form the fused gamma-pyrone core, resulting in pyranterreones 7 and 11, respectively. The hydroxy group at C-8 of pyranterreones 7 and 11 are dehydrated by the aspartyl protease pytH to form a delta-7 double bond to give pyranterreones 3 and 1, 2 accordingly. The exo-methylene of pyranterreone 3 could be reduced into a pendant methyl by reductase pytE to provide pyranterreone 4, also known as cordylactam. Pyranterreone 4 can be reconverted to pyranterreone 3 through pytB-catalyzed dehydrogenation or further oxidized to pyranterreones 9 and 10. The protein is FAD-linked oxidoreductase pytB of Aspergillus terreus (strain NIH 2624 / FGSC A1156).